The chain runs to 968 residues: RNA polymerase-associated protein RapA (968 aa).

The Helicase ATP-binding domain maps to 163–332 (EVGRRYAPRV…FARLRLLDPD (170 aa)). Residue 176–183 (DEVGLGKT) coordinates ATP. The short motif at 278–281 (DEAH) is the DEAH box element. One can recognise a Helicase C-terminal domain in the interval 491–641 (RVDWLIEFLK…AFELTCPSGH (151 aa)).

Belongs to the SNF2/RAD54 helicase family. RapA subfamily. In terms of assembly, interacts with the RNAP. Has a higher affinity for the core RNAP than for the holoenzyme. Its ATPase activity is stimulated by binding to RNAP.

Transcription regulator that activates transcription by stimulating RNA polymerase (RNAP) recycling in case of stress conditions such as supercoiled DNA or high salt concentrations. Probably acts by releasing the RNAP, when it is trapped or immobilized on tightly supercoiled DNA. Does not activate transcription on linear DNA. Probably not involved in DNA repair. This is RNA polymerase-associated protein RapA from Shewanella baltica (strain OS185).